Here is a 204-residue protein sequence, read N- to C-terminus: Tumor necrosis factor alpha-induced protein 8-like protein 3 (204 aa).

Acidic residues predominate over residues 1-10 (MDSDSGEQSE). The disordered stretch occupies residues 1 to 20 (MDSDSGEQSEGEPGTAAGPH). The segment at 21-204 (VFSSKNLALQ…INKLLDDKIL (184 aa)) is binding to phosphoinositides.

The protein belongs to the TNFAIP8 family. In terms of tissue distribution, widely expressed (at protein level).

The protein localises to the cytoplasm. The protein resides in the cell membrane. In terms of biological role, acts as a lipid transfer protein. Preferentially captures and shuttles two lipid second messengers, i.e., phosphatidylinositol 4,5- bisphosphate and phosphatidylinositol 3,4,5-trisphosphate and increases their levels in the plasma membrane. Additionally, may also function as a lipid-presenting protein to enhance the activity of the PI3K-AKT and MEK-ERK pathways. May act as a regulator of tumorigenesis through its activation of phospholipid signaling. In Mus musculus (Mouse), this protein is Tumor necrosis factor alpha-induced protein 8-like protein 3 (Tnfaip8l3).